The chain runs to 267 residues: uncharacterized protein (267 aa).

This is an uncharacterized protein from Saccharomyces cerevisiae (strain ATCC 204508 / S288c) (Baker's yeast).